A 306-amino-acid polypeptide reads, in one-letter code: Probable L,D-transpeptidase YbiS (306 aa).

The N-terminal stretch at 1–24 is a signal peptide; that stretch reads MNMKLKTLFAAAFAVVGFCSTASA. One can recognise a L,D-TPase catalytic domain in the interval 99–234; that stretch reads EGIVINSAEM…VPVGTRVQFI (136 aa). Residue His-194 is the Proton donor/acceptor of the active site. Cys-210 acts as the Nucleophile in catalysis.

The protein belongs to the YkuD family.

It localises to the periplasm. The protein operates within cell wall biogenesis; peptidoglycan biosynthesis. Its function is as follows. Responsible, at least in part, for anchoring of the major outer membrane lipoprotein (Lpp) to the peptidoglycan via a meso-diaminopimelyl-L-Lys- bond on the terminal residue of Lpp. This is Probable L,D-transpeptidase YbiS (ybiS) from Escherichia coli O6:H1 (strain CFT073 / ATCC 700928 / UPEC).